The sequence spans 239 residues: Bidirectional sugar transporter SWEET8 (239 aa).

Over 1–6 (MVDAKQ) the chain is Extracellular. Residues 7–27 (VRFIIGVIGNVISFGLFAAPA) traverse the membrane as a helical segment. The MtN3/slv 1 domain occupies 9-98 (FIIGVIGNVI…VYLMYCGHKK (90 aa)). Topologically, residues 28-44 (KTFWRIFKKKSVEEFSY) are cytoplasmic. The chain crosses the membrane as a helical span at residues 45–65 (VPYVATVMNCMLWVFYGLPVV). Residues 66-69 (HKDS) lie on the Extracellular side of the membrane. Residues 70-90 (ILVSTINGVGLVIELFYVGVY) traverse the membrane as a helical segment. The Cytoplasmic portion of the chain corresponds to 91 to 103 (LMYCGHKKNHRRN). The helical transmembrane segment at 104–124 (ILGFLALEVILVVAIILITLF) threads the bilayer. The Extracellular portion of the chain corresponds to 125 to 135 (ALKGDFVKQTF). Residues 134 to 185 (TFVGVICDVFNIAMYGAPSLAIIKVVKTKSVEYMPFLLSLVCFVNAGIWTTY) enclose the MtN3/slv 2 domain. The helical transmembrane segment at 136 to 156 (VGVICDVFNIAMYGAPSLAII) threads the bilayer. Residues 157-168 (KVVKTKSVEYMP) lie on the Cytoplasmic side of the membrane. The chain crosses the membrane as a helical span at residues 169-189 (FLLSLVCFVNAGIWTTYSLIF). Topologically, residues 190–194 (KIDYY) are extracellular. A helical transmembrane segment spans residues 195–215 (VLASNGIGTFLALSQLIVYFM). Residues 216-239 (YYKSTPKEKTVKPSEVEISATERV) are Cytoplasmic-facing.

It belongs to the SWEET sugar transporter family. Forms homooligomers and heterooligomers with SWEET4, SWEET5, SWEET6, SWEET7, SWEET9, SWEET10, SWEET11, SWEET13, SWEET15, SWEET16 and SWEET17. Expressed in inflorescences, embryo sacs and pollen, and at a lower level in stems. Barely detected in roots, leaves and seedlings.

The protein localises to the cell membrane. Mediates both low-affinity uptake and efflux of sugar across the plasma membrane. Required, in pollen, for microspore cell integrity and primexine pattern formation. In Arabidopsis thaliana (Mouse-ear cress), this protein is Bidirectional sugar transporter SWEET8.